We begin with the raw amino-acid sequence, 119 residues long: Large ribosomal subunit protein uL18 (119 aa).

Belongs to the universal ribosomal protein uL18 family. As to quaternary structure, part of the 50S ribosomal subunit; part of the 5S rRNA/L5/L18/L25 subcomplex. Contacts the 5S and 23S rRNAs.

In terms of biological role, this is one of the proteins that bind and probably mediate the attachment of the 5S RNA into the large ribosomal subunit, where it forms part of the central protuberance. In Nitrosomonas europaea (strain ATCC 19718 / CIP 103999 / KCTC 2705 / NBRC 14298), this protein is Large ribosomal subunit protein uL18.